The sequence spans 349 residues: Rhodopsin (349 aa).

Over 1-33 (TEGPYFYIPMSNATGVVRSPYEYPQYYLVYPAA) the chain is Extracellular. The N-linked (GlcNAc...) asparagine glycan is linked to asparagine 12. Residues 34-58 (FAVLGAYMFFLIIFGFPVNFLTLYV) traverse the membrane as a helical segment. Residues 59–70 (TIEHKKLRTPLN) lie on the Cytoplasmic side of the membrane. Residues 71–93 (YILLNLAVADLFMVIGGFTTTIY) traverse the membrane as a helical segment. At 94-107 (TSMHGYFVLGRLGC) the chain is on the extracellular side. Cysteines 107 and 184 form a disulfide. Residues 108 to 130 (NLEGFSATLGGMISLWSLVVLAV) traverse the membrane as a helical segment. Residues 131 to 133 (ERW) carry the 'Ionic lock' involved in activated form stabilization motif. The Cytoplasmic segment spans residues 131–149 (ERWVVVCKPMSNFRFGENH). Residues 150–170 (AIMGVTLTWAMGLACTVPPLV) traverse the membrane as a helical segment. The Extracellular portion of the chain corresponds to 171–199 (GWSRYIPEGMQCSCGIDYYTRAEGFNNES). A glycan (N-linked (GlcNAc...) asparagine) is linked at asparagine 197. A helical membrane pass occupies residues 200-221 (FVLYMFVCHFSFPLVVIFFCYG). Residues 222-249 (RLLCAVKEAAAAQQESETTQRAEREVTR) lie on the Cytoplasmic side of the membrane. Residues 250 to 271 (MVILMVIGFLVCWLPYASVAWY) traverse the membrane as a helical segment. The Extracellular segment spans residues 272-283 (IFTHQGSEFGPL). Residues 284–305 (FMTIPAFFAKSSAIYNPVIYIC) traverse the membrane as a helical segment. At lysine 293 the chain carries N6-(retinylidene)lysine. The Cytoplasmic portion of the chain corresponds to 306–349 (LNKQFRQCMLTTLFCGKNPFEEEEGASSTKTEASSASSSSVSPA). Residue cysteine 320 is the site of S-palmitoyl cysteine attachment. The segment at 326-349 (EEEEGASSTKTEASSASSSSVSPA) is disordered. Low complexity predominate over residues 331–349 (ASSTKTEASSASSSSVSPA).

Belongs to the G-protein coupled receptor 1 family. Opsin subfamily. Post-translationally, phosphorylated on some or all of the serine and threonine residues present in the C-terminal region. In terms of processing, contains one covalently linked retinal chromophore.

The protein localises to the membrane. Its subcellular location is the cell projection. It localises to the cilium. It is found in the photoreceptor outer segment. Photoreceptor required for image-forming vision at low light intensity. While most salt water fish species use retinal as chromophore, most freshwater fish use 3-dehydroretinal, or a mixture of retinal and 3-dehydroretinal. Light-induced isomerization of 11-cis to all-trans retinal triggers a conformational change that activates signaling via G-proteins. Subsequent receptor phosphorylation mediates displacement of the bound G-protein alpha subunit by arrestin and terminates signaling. The sequence is that of Rhodopsin (rho) from Myripristis berndti (Bigscale soldierfish).